A 393-amino-acid chain; its full sequence is Probable galacturonosyltransferase-like 8 (393 aa).

Residues 1–4 are Cytoplasmic-facing; that stretch reads MSSR. Residues 5-25 traverse the membrane as a helical; Signal-anchor for type II membrane protein segment; the sequence is FSLTVVCLIALLPFVVGIRLI. Residues 26-393 lie on the Lumenal side of the membrane; sequence PARITSVGDG…SELTDDSSFL (368 aa). Residue N226 is glycosylated (N-linked (GlcNAc...) asparagine).

The protein belongs to the glycosyltransferase 8 family.

The protein localises to the golgi apparatus membrane. It participates in glycan metabolism; pectin biosynthesis. In terms of biological role, may be involved in pectin and/or xylans biosynthesis in cell walls. This chain is Probable galacturonosyltransferase-like 8 (GATL8), found in Arabidopsis thaliana (Mouse-ear cress).